The following is a 202-amino-acid chain: ATP-dependent Clp protease proteolytic subunit (202 aa).

Ser106 acts as the Nucleophile in catalysis. Residue His131 is part of the active site.

This sequence belongs to the peptidase S14 family. As to quaternary structure, fourteen ClpP subunits assemble into 2 heptameric rings which stack back to back to give a disk-like structure with a central cavity, resembling the structure of eukaryotic proteasomes.

Its subcellular location is the cytoplasm. It carries out the reaction Hydrolysis of proteins to small peptides in the presence of ATP and magnesium. alpha-casein is the usual test substrate. In the absence of ATP, only oligopeptides shorter than five residues are hydrolyzed (such as succinyl-Leu-Tyr-|-NHMec, and Leu-Tyr-Leu-|-Tyr-Trp, in which cleavage of the -Tyr-|-Leu- and -Tyr-|-Trp bonds also occurs).. Functionally, cleaves peptides in various proteins in a process that requires ATP hydrolysis. Has a chymotrypsin-like activity. Plays a major role in the degradation of misfolded proteins. The polypeptide is ATP-dependent Clp protease proteolytic subunit (Shewanella sp. (strain W3-18-1)).